A 248-amino-acid chain; its full sequence is UPF0736 protein BT9727_1080 (248 aa).

The protein belongs to the UPF0736 family.

This is UPF0736 protein BT9727_1080 from Bacillus thuringiensis subsp. konkukian (strain 97-27).